The sequence spans 87 residues: Large ribosomal subunit protein eL33 (87 aa).

It belongs to the eukaryotic ribosomal protein eL33 family.

The protein is Large ribosomal subunit protein eL33 of Pyrococcus horikoshii (strain ATCC 700860 / DSM 12428 / JCM 9974 / NBRC 100139 / OT-3).